We begin with the raw amino-acid sequence, 175 residues long: Ribonuclease M5 (175 aa).

The 81-residue stretch at 3–83 (NEIIIVEGKS…DVDVFNAFVS (81 aa)) folds into the Toprim domain. Residues Glu9, Asp57, and Asp59 each contribute to the Mg(2+) site.

It belongs to the ribonuclease M5 family. Mg(2+) is required as a cofactor.

The protein resides in the cytoplasm. The enzyme catalyses Endonucleolytic cleavage of RNA, removing 21 and 42 nucleotides, respectively, from the 5'- and 3'-termini of a 5S-rRNA precursor.. Functionally, required for correct processing of both the 5' and 3' ends of 5S rRNA precursor. Cleaves both sides of a double-stranded region yielding mature 5S rRNA in one step. This is Ribonuclease M5 from Mesoplasma florum (strain ATCC 33453 / NBRC 100688 / NCTC 11704 / L1) (Acholeplasma florum).